The chain runs to 397 residues: Acetate kinase (397 aa).

Asn8 lines the Mg(2+) pocket. Lys15 is a binding site for ATP. Arg89 lines the substrate pocket. Asp146 serves as the catalytic Proton donor/acceptor. Residues His206–Gly210, Asp281–Arg283, and Gly329–Asn333 contribute to the ATP site. Glu382 serves as a coordination point for Mg(2+).

This sequence belongs to the acetokinase family. As to quaternary structure, homodimer. Mg(2+) serves as cofactor. Requires Mn(2+) as cofactor.

Its subcellular location is the cytoplasm. The catalysed reaction is acetate + ATP = acetyl phosphate + ADP. The protein operates within metabolic intermediate biosynthesis; acetyl-CoA biosynthesis; acetyl-CoA from acetate: step 1/2. In terms of biological role, catalyzes the formation of acetyl phosphate from acetate and ATP. Can also catalyze the reverse reaction. This Bacillus thuringiensis subsp. konkukian (strain 97-27) protein is Acetate kinase.